The sequence spans 146 residues: D-aminoacyl-tRNA deacylase (146 aa).

The short motif at 137–138 is the Gly-cisPro motif, important for rejection of L-amino acids element; it reads GP.

The protein belongs to the DTD family. As to quaternary structure, homodimer.

The protein resides in the cytoplasm. The catalysed reaction is glycyl-tRNA(Ala) + H2O = tRNA(Ala) + glycine + H(+). It catalyses the reaction a D-aminoacyl-tRNA + H2O = a tRNA + a D-alpha-amino acid + H(+). Its function is as follows. An aminoacyl-tRNA editing enzyme that deacylates mischarged D-aminoacyl-tRNAs. Also deacylates mischarged glycyl-tRNA(Ala), protecting cells against glycine mischarging by AlaRS. Acts via tRNA-based rather than protein-based catalysis; rejects L-amino acids rather than detecting D-amino acids in the active site. By recycling D-aminoacyl-tRNA to D-amino acids and free tRNA molecules, this enzyme counteracts the toxicity associated with the formation of D-aminoacyl-tRNA entities in vivo and helps enforce protein L-homochirality. The chain is D-aminoacyl-tRNA deacylase from Variovorax paradoxus (strain S110).